A 314-amino-acid chain; its full sequence is Protoheme IX farnesyltransferase (314 aa).

7 consecutive transmembrane segments (helical) span residues 58-78, 107-127, 130-150, 173-193, 227-247, 248-268, and 294-314; these read LWLV…ASVF, AALV…YVWV, LSAA…TMLL, WTAV…VVFF, VGRQ…LLWP, VAGT…VFLL, and SSNL…LLAG.

This sequence belongs to the UbiA prenyltransferase family. Protoheme IX farnesyltransferase subfamily.

It is found in the cell membrane. It catalyses the reaction heme b + (2E,6E)-farnesyl diphosphate + H2O = Fe(II)-heme o + diphosphate. It functions in the pathway porphyrin-containing compound metabolism; heme O biosynthesis; heme O from protoheme: step 1/1. Converts heme B (protoheme IX) to heme O by substitution of the vinyl group on carbon 2 of heme B porphyrin ring with a hydroxyethyl farnesyl side group. In Nocardioides sp. (strain ATCC BAA-499 / JS614), this protein is Protoheme IX farnesyltransferase.